Consider the following 309-residue polypeptide: MKKLGFLSLLLLAVCTLFACSNQKNASSDSSKLKVVATNSIIADITKNIAGDKIDLHSIVPVGKDPHEYEPLPEDVKKTSQADLIFYNGINLETGGNAWFTKLVKNANKEENKDYYAVSDGVDVIYLEGQSEKGKEDPHAWLNLENGIIYAQNIAKRLIEKDPDNKATYEKNLKAYVEKLTALDKEAKEKFNNIPEEKKMIVTSEGCFKYFSKAYNVPSAYIWEINTEEEGTPDQIKSLVEKLRKTKVPSLFVESSVDDRPMKTVSKDTNIPIHAKIFTDSIADQGEEGDTYYSMMKYNLDKISEGLAK.

The first 19 residues, 1-19, serve as a signal peptide directing secretion; that stretch reads MKKLGFLSLLLLAVCTLFA. A lipid anchor (N-palmitoyl cysteine) is attached at Cys-20. Cys-20 is lipidated: S-diacylglycerol cysteine. The a divalent metal cation site is built by His-67, His-139, Glu-205, and Asp-280.

The protein belongs to the bacterial solute-binding protein 9 family. Lipoprotein receptor antigen (Lrai) subfamily. In terms of assembly, homodimer and homotrimer.

It is found in the cell membrane. Its function is as follows. Part of an ATP-binding cassette (ABC) transport system involved in metal import. Binds a metal with high affinity and specificity and delivers it to the membrane permease for translocation into the cytoplasm. Also acts as an adhesin which is involved on adherence to extracellular matrix. It is an important factor in the pathogenesis and infection. May contribute to the formation and accumulation of dental plaque. The chain is Metal ABC transporter substrate-binding lipoprotein SsaB (ssaB) from Streptococcus sanguinis.